The sequence spans 278 residues: Small ribosomal subunit protein uS3 (278 aa).

The KH type-2 domain occupies 39 to 107 (VRDFLKKRLA…PVHVNIEEVR (69 aa)). Positions 217–278 (VENENEARRG…DAAAVEKEVS (62 aa)) are disordered. The segment covering 230–239 (PRNDAGDNRG) has biased composition (basic and acidic residues).

This sequence belongs to the universal ribosomal protein uS3 family. As to quaternary structure, part of the 30S ribosomal subunit. Forms a tight complex with proteins S10 and S14.

Its function is as follows. Binds the lower part of the 30S subunit head. Binds mRNA in the 70S ribosome, positioning it for translation. The polypeptide is Small ribosomal subunit protein uS3 (Aromatoleum aromaticum (strain DSM 19018 / LMG 30748 / EbN1) (Azoarcus sp. (strain EbN1))).